Reading from the N-terminus, the 183-residue chain is Threonylcarbamoyl-AMP synthase (183 aa).

Residues 1–183 (MNREQIADAL…LRTNQLFRQG (183 aa)) enclose the YrdC-like domain.

The protein belongs to the SUA5 family. TsaC subfamily.

The protein resides in the cytoplasm. The enzyme catalyses L-threonine + hydrogencarbonate + ATP = L-threonylcarbamoyladenylate + diphosphate + H2O. Functionally, required for the formation of a threonylcarbamoyl group on adenosine at position 37 (t(6)A37) in tRNAs that read codons beginning with adenine. Catalyzes the conversion of L-threonine, HCO(3)(-)/CO(2) and ATP to give threonylcarbamoyl-AMP (TC-AMP) as the acyladenylate intermediate, with the release of diphosphate. This is Threonylcarbamoyl-AMP synthase from Haemophilus influenzae (strain ATCC 51907 / DSM 11121 / KW20 / Rd).